A 450-amino-acid chain; its full sequence is Protein DA1-related 3 (450 aa).

Positions 1–46 (MVRRKRQEEDEKIEIERVKEESLKLAKQAEEKRRLEESKEQGKRIQ) form a coiled coil. Composition is skewed to basic and acidic residues over residues 27–47 (KQAE…RIQV) and 56–69 (TSKD…SKDV). The segment at 27–87 (KQAEEKRRLE…PSIDGKSEIG (61 aa)) is disordered.

This chain is Protein DA1-related 3 (DAR3), found in Arabidopsis thaliana (Mouse-ear cress).